A 337-amino-acid polypeptide reads, in one-letter code: DNA-directed RNA polymerase subunit alpha (337 aa).

The alpha N-terminal domain (alpha-NTD) stretch occupies residues 1 to 233 (MVREEVTIST…NLFIPFLHAE (233 aa)). An alpha C-terminal domain (alpha-CTD) region spans residues 266-337 (GIALKCIFID…FAMNLPKDFF (72 aa)).

The protein belongs to the RNA polymerase alpha chain family. As to quaternary structure, in plastids the minimal PEP RNA polymerase catalytic core is composed of four subunits: alpha, beta, beta', and beta''. When a (nuclear-encoded) sigma factor is associated with the core the holoenzyme is formed, which can initiate transcription.

It localises to the plastid. The protein localises to the chloroplast. It catalyses the reaction RNA(n) + a ribonucleoside 5'-triphosphate = RNA(n+1) + diphosphate. Its function is as follows. DNA-dependent RNA polymerase catalyzes the transcription of DNA into RNA using the four ribonucleoside triphosphates as substrates. This is DNA-directed RNA polymerase subunit alpha from Ceratophyllum demersum (Rigid hornwort).